The following is a 614-amino-acid chain: Nuclear receptor subfamily 1 group D member 1 (614 aa).

Over residues 1-48 the composition is skewed to polar residues; the sequence is MTTLDSNNNTGGVITYIGSSGSSPNRTSPESLYSDSSNGSFQSLTQGC. The tract at residues 1–70 is required for phosphorylation by CSNK1E and cytoplasmic localization; the sequence is MTTLDSNNNT…TQDPARSFGS (70 aa). The tract at residues 1–120 is disordered; it reads MTTLDSNNNT…GNRVSPSKST (120 aa). Residues 1–129 form a modulating region; it reads MTTLDSNNNT…TSNITKLNGM (129 aa). The interval 49–285 is crucial for activation of GJA1; it reads PTYFPPSPTG…PPRSPSPEPT (237 aa). A phosphoserine; by GSK3-beta mark is found at S55 and S59. A compositionally biased stretch (low complexity) spans 69–103; the sequence is GSIPPSLGDDGSPSSSSSSSSSSSSSFYNGSPPGG. A DNA-binding region (nuclear receptor) is located at residues 130 to 206; it reads VLLCKVCGDV…VGMSRDAVRF (77 aa). NR C4-type zinc fingers lie at residues 133 to 153 and 170 to 194; these read CKVC…CEGC and CLKN…FKKC. An N6-acetyllysine; by KAT5 mark is found at K192 and K193. The segment at 233–286 is disordered; sequence SSQCPLETPPTQHPTPGPMGPSPPPAPAPSPLVGFSQFPQQLTPPRSPSPEPTV. The span at 239-262 shows a compositional bias: pro residues; it reads ETPPTQHPTPGPMGPSPPPAPAPS. At T275 the chain carries Phosphothreonine; by CDK1. In terms of domain architecture, NR LBD spans 285-614; it reads TVEDVISQVA…KLLSFRVDAQ (330 aa). C418 provides a ligand contact to heme. Residue K591 is modified to N6-acetyllysine. A heme-binding site is contributed by H602.

This sequence belongs to the nuclear hormone receptor family. NR1 subfamily. Binds DNA as a monomer or a homodimer. Interacts with C1D, NR2E3, SP1 and ZNHIT1. Interacts with OPHN1 (via C-terminus). Interacts with PER2; the interaction associates PER2 to BMAL1 promoter region. Interacts with CRY1. Interacts with CCAR2. Interacts with SIAH2. Interacts with FBXW7 and CDK1. Interacts with HUWE1. Interacts with NR0B2. Interacts with NFIL3. Interacts (via domain NR LBD) with HSP90AA1 and HSP90AB1. In terms of processing, ubiquitinated, leading to its proteasomal degradation. Ubiquitinated by the SCF(FBXW7) complex when phosphorylated by CDK1 leading to its proteasomal degradation. Ubiquitinated by SIAH2; leading to its proteasomal degradation. Rapidly ubiquitinated in response to inflammatory triggers and sumoylation is a prerequisite to its ubiquitination. Post-translationally, sumoylated by UBE2I, desumoylated by SENP1, and sumoylation is a prerequisite to its ubiquitination. Phosphorylated by CSNK1E; phosphorylation enhances its cytoplasmic localization. In terms of processing, undergoes lysosome-mediated degradation in a time-dependent manner in the liver. Expressed in all tissues and cell lines examined. Expressed at high levels in some squamous carcinoma cell lines.

The protein localises to the nucleus. It is found in the cytoplasm. It localises to the cell projection. The protein resides in the dendrite. Its subcellular location is the dendritic spine. Functionally, transcriptional repressor which coordinates circadian rhythm and metabolic pathways in a heme-dependent manner. Integral component of the complex transcription machinery that governs circadian rhythmicity and forms a critical negative limb of the circadian clock by directly repressing the expression of core clock components BMAL1, CLOCK and CRY1. Also regulates genes involved in metabolic functions, including lipid and bile acid metabolism, adipogenesis, gluconeogenesis and the macrophage inflammatory response. Acts as a receptor for heme which stimulates its interaction with the NCOR1/HDAC3 corepressor complex, enhancing transcriptional repression. Recognizes two classes of DNA response elements within the promoter of its target genes and can bind to DNA as either monomers or homodimers, depending on the nature of the response element. Binds as a monomer to a response element composed of the consensus half-site motif 5'-[A/G]GGTCA-3' preceded by an A/T-rich 5' sequence (RevRE), or as a homodimer to a direct repeat of the core motif spaced by two nucleotides (RevDR-2). Acts as a potent competitive repressor of ROR alpha (RORA) function and regulates the levels of its ligand heme by repressing the expression of PPARGC1A, a potent inducer of heme synthesis. Regulates lipid metabolism by repressing the expression of APOC3 and by influencing the activity of sterol response element binding proteins (SREBPs); represses INSIG2 which interferes with the proteolytic activation of SREBPs which in turn govern the rhythmic expression of enzymes with key functions in sterol and fatty acid synthesis. Regulates gluconeogenesis via repression of G6PC1 and PEPCK and adipocyte differentiation via repression of PPARG. Regulates glucagon release in pancreatic alpha-cells via the AMPK-NAMPT-SIRT1 pathway and the proliferation, glucose-induced insulin secretion and expression of key lipogenic genes in pancreatic-beta cells. Positively regulates bile acid synthesis by increasing hepatic expression of CYP7A1 via repression of NR0B2 and NFIL3 which are negative regulators of CYP7A1. Modulates skeletal muscle oxidative capacity by regulating mitochondrial biogenesis and autophagy; controls mitochondrial biogenesis and respiration by interfering with the STK11-PRKAA1/2-SIRT1-PPARGC1A signaling pathway. Represses the expression of SERPINE1/PAI1, an important modulator of cardiovascular disease and the expression of inflammatory cytokines and chemokines in macrophages. Represses gene expression at a distance in macrophages by inhibiting the transcription of enhancer-derived RNAs (eRNAs). Plays a role in the circadian regulation of body temperature and negatively regulates thermogenic transcriptional programs in brown adipose tissue (BAT); imposes a circadian oscillation in BAT activity, increasing body temperature when awake and depressing thermogenesis during sleep. In concert with NR2E3, regulates transcriptional networks critical for photoreceptor development and function. In addition to its activity as a repressor, can also act as a transcriptional activator. In the ovarian granulosa cells acts as a transcriptional activator of STAR which plays a role in steroid biosynthesis. In collaboration with SP1, activates GJA1 transcription in a heme-independent manner. Represses the transcription of CYP2B10, CYP4A10 and CYP4A14. Represses the transcription of CES2. Represses and regulates the circadian expression of TSHB in a NCOR1-dependent manner. Negatively regulates the protein stability of NR3C1 and influences the time-dependent subcellular distribution of NR3C1, thereby affecting its transcriptional regulatory activity. Plays a critical role in the circadian control of neutrophilic inflammation in the lung; under resting, non-stress conditions, acts as a rhythmic repressor to limit inflammatory activity whereas in the presence of inflammatory triggers undergoes ubiquitin-mediated degradation thereby relieving inhibition of the inflammatory response. Plays a key role in the circadian regulation of microglial activation and neuroinflammation; suppresses microglial activation through the NF-kappaB pathway in the central nervous system. Plays a role in the regulation of the diurnal rhythms of lipid and protein metabolism in the skeletal muscle via transcriptional repression of genes controlling lipid and amino acid metabolism in the muscle. The protein is Nuclear receptor subfamily 1 group D member 1 (NR1D1) of Ovis aries (Sheep).